We begin with the raw amino-acid sequence, 425 residues long: Serine--tRNA ligase (425 aa).

Position 227–229 (T227–E229) interacts with L-serine. ATP is bound by residues R258–E260 and V274. E281 serves as a coordination point for L-serine. Residue E347–S350 coordinates ATP. T382 is an L-serine binding site.

It belongs to the class-II aminoacyl-tRNA synthetase family. Type-1 seryl-tRNA synthetase subfamily. As to quaternary structure, homodimer. The tRNA molecule binds across the dimer.

It localises to the cytoplasm. It catalyses the reaction tRNA(Ser) + L-serine + ATP = L-seryl-tRNA(Ser) + AMP + diphosphate + H(+). The enzyme catalyses tRNA(Sec) + L-serine + ATP = L-seryl-tRNA(Sec) + AMP + diphosphate + H(+). The protein operates within aminoacyl-tRNA biosynthesis; selenocysteinyl-tRNA(Sec) biosynthesis; L-seryl-tRNA(Sec) from L-serine and tRNA(Sec): step 1/1. Its function is as follows. Catalyzes the attachment of serine to tRNA(Ser). Is also able to aminoacylate tRNA(Sec) with serine, to form the misacylated tRNA L-seryl-tRNA(Sec), which will be further converted into selenocysteinyl-tRNA(Sec). The polypeptide is Serine--tRNA ligase (Deinococcus radiodurans (strain ATCC 13939 / DSM 20539 / JCM 16871 / CCUG 27074 / LMG 4051 / NBRC 15346 / NCIMB 9279 / VKM B-1422 / R1)).